A 155-amino-acid polypeptide reads, in one-letter code: Ribosome maturation factor RimP (155 aa).

This sequence belongs to the RimP family.

Its subcellular location is the cytoplasm. Its function is as follows. Required for maturation of 30S ribosomal subunits. In Prochlorococcus marinus (strain MIT 9515), this protein is Ribosome maturation factor RimP.